Consider the following 44-residue polypeptide: Large ribosomal subunit protein bL36 (44 aa).

This sequence belongs to the bacterial ribosomal protein bL36 family.

The sequence is that of Large ribosomal subunit protein bL36 from Pseudoalteromonas translucida (strain TAC 125).